The sequence spans 189 residues: Glycerol-3-phosphate acyltransferase (189 aa).

5 helical membrane-spanning segments follow: residues 1-21, 50-70, 77-97, 111-131, and 151-171; these read MFWLLALLAYLLGSLSFAIVL, KLAILTLLGDLCKGLLPVLLA, LHAQAWVGVCAVLGHLFPLYF, MLMGLYFPAALLAIGAWLLTF, and LLAWREPEALLPITVLTAMIV.

The protein belongs to the PlsY family. As to quaternary structure, probably interacts with PlsX.

It localises to the cell inner membrane. The catalysed reaction is an acyl phosphate + sn-glycerol 3-phosphate = a 1-acyl-sn-glycero-3-phosphate + phosphate. It participates in lipid metabolism; phospholipid metabolism. Its function is as follows. Catalyzes the transfer of an acyl group from acyl-phosphate (acyl-PO(4)) to glycerol-3-phosphate (G3P) to form lysophosphatidic acid (LPA). This enzyme utilizes acyl-phosphate as fatty acyl donor, but not acyl-CoA or acyl-ACP. This Pseudomonas putida (strain GB-1) protein is Glycerol-3-phosphate acyltransferase.